Here is a 467-residue protein sequence, read N- to C-terminus: UDP-glycosyltransferase 71D2 (467 aa).

UDP-alpha-D-glucose is bound by residues serine 283, 339-341 (SPQ), 356-364 (HCGWNSIVE), and 378-381 (YAEQ).

It belongs to the UDP-glycosyltransferase family.

The polypeptide is UDP-glycosyltransferase 71D2 (UGT71D2) (Arabidopsis thaliana (Mouse-ear cress)).